A 475-amino-acid chain; its full sequence is MAAGTVRGLAVAGGGESSESEDDGWEIGYLDRSAQKLKGPLLPEEKNETFKKALTTGDISLVQELLDSGLSVDSSFRYGWTPLMYAASVSNVELVRVLLDRGANASFDKDKQTILITACSARGSEEQILKCVELLLSRNADPNVACRRLMTPIMYAARDGHPQVVALLVAHGAEVNAQDENGYTALTWAARQGHKNVVLKLLELGANKMLQTKDGKTPSEIAKRNKHLEIFNFLSLTLNPLEGKLQQLTKEETICKLLTTDSDKEKDHIFSSYTAFGDLEIFLHGLGLEHMTDLLKERDITLRHLLTMRKDEFTKNGITNRDQQKILAALKELEVEEIKFGELPEVAKLEISGDEFLNFLLKLNKQCGHLITAVQNIISELPVNSHKIVLEWSSPQNFTSVCEELVSNVEDLSEEVCKLKDLIQKLQNERENDPTHIPLMEEVSTWNSRILKRTAVTVCGFGFLLFICKLTFQRK.

The tract at residues 1–24 (MAAGTVRGLAVAGGGESSESEDDG) is disordered. Serine 17, serine 18, and serine 20 each carry phosphoserine. 6 ANK repeats span residues 45-74 (EKNE…SVDS), 78-107 (YGWT…NASF), 110-144 (DKQT…DPNV), 148-177 (RLMT…EVNA), 181-210 (NGYT…NKML), and 214-243 (DGKT…PLEG). Positions 272-334 (SYTAFGDLEI…KILAALKELE (63 aa)) constitute an SAM domain.

As to quaternary structure, interacts with DDX4, PIWIL1, RANBP9 and TDRD1.

It localises to the cytoplasm. Its function is as follows. Plays a central role during spermatogenesis by repressing transposable elements and preventing their mobilization, which is essential for the germline integrity. Acts via the piRNA metabolic process, which mediates the repression of transposable elements during meiosis by forming complexes composed of piRNAs and Piwi proteins and governs the methylation and subsequent repression of transposons. Its association with pi-bodies suggests a participation in the primary piRNAs metabolic process. Required prior to the pachytene stage to facilitate the production of multiple types of piRNAs, including those associated with repeats involved in the regulation of retrotransposons. May act by mediating protein-protein interactions during germ cell maturation. This is Ankyrin repeat, SAM and basic leucine zipper domain-containing protein 1 (ASZ1) from Neofelis nebulosa (Clouded leopard).